The following is a 432-amino-acid chain: Benzoyl-CoA reductase subunit B (432 aa).

The protein belongs to the FldB/FldC dehydratase alpha/beta subunit family. As to quaternary structure, heterotetramer composed of A, B, C, and D subunits. Requires iron-sulfur cluster as cofactor. It depends on an oxidized flavin as a cofactor.

The catalysed reaction is cyclohexa-1,5-diene-1-carbonyl-CoA + oxidized 2[4Fe-4S]-[ferredoxin] + 2 ADP + 2 phosphate = reduced 2[4Fe-4S]-[ferredoxin] + benzoyl-CoA + 2 ATP + 2 H2O. It carries out the reaction 3-hydroxybenzoyl-CoA + AH2 + 2 ATP + 2 H2O = 3-hydroxycyclohexa-1,5-diene-1-carbonyl-CoA + A + 2 ADP + 2 phosphate + 2 H(+). Functionally, catalyzes the anaerobic reduction of benzoyl-CoA and 3-hydroxybenzoyl-CoA to form cyclohexa-1,5-diene-1-carbonyl-CoA and 3-hydroxycyclohexa-1,5-diene-1-carbonyl-CoA, respectively. The enzyme also reduces other benzoyl-CoA analogs with small substituents at the aromatic ring. This chain is Benzoyl-CoA reductase subunit B (bcrB), found in Thauera aromatica.